The chain runs to 455 residues: Ribulose bisphosphate carboxylase large chain (455 aa).

Residue lysine 5 is modified to N6,N6,N6-trimethyllysine. Positions 114 and 164 each coordinate substrate. Lysine 166 functions as the Proton acceptor in the catalytic mechanism. A substrate-binding site is contributed by lysine 168. The Mg(2+) site is built by lysine 192, aspartate 194, and glutamate 195. Lysine 192 is subject to N6-carboxylysine. The active-site Proton acceptor is the histidine 285. The substrate site is built by arginine 286, histidine 318, and serine 370.

It belongs to the RuBisCO large chain family. Type I subfamily. Heterohexadecamer of 8 large chains and 8 small chains; disulfide-linked. The disulfide link is formed within the large subunit homodimers. The cofactor is Mg(2+). In terms of processing, the disulfide bond which can form in the large chain dimeric partners within the hexadecamer appears to be associated with oxidative stress and protein turnover.

The protein resides in the plastid. Its subcellular location is the chloroplast. It carries out the reaction 2 (2R)-3-phosphoglycerate + 2 H(+) = D-ribulose 1,5-bisphosphate + CO2 + H2O. The catalysed reaction is D-ribulose 1,5-bisphosphate + O2 = 2-phosphoglycolate + (2R)-3-phosphoglycerate + 2 H(+). Its function is as follows. RuBisCO catalyzes two reactions: the carboxylation of D-ribulose 1,5-bisphosphate, the primary event in carbon dioxide fixation, as well as the oxidative fragmentation of the pentose substrate in the photorespiration process. Both reactions occur simultaneously and in competition at the same active site. The chain is Ribulose bisphosphate carboxylase large chain from Senna didymobotrya (Popcorn cassia).